The sequence spans 746 residues: Root phototropism protein 3 (746 aa).

The segment at 1-24 (MMWESESDGGVGVGGGGGREYGDG) is disordered. Positions 9–19 (GGVGVGGGGGR) are enriched in gly residues. In terms of domain architecture, BTB spans 54–122 (SDLLVKIGDM…CYGVPVDLTA (69 aa)). Residues 250 to 605 (DWWFEDVSIL…VQVLFSEQVK (356 aa)) form the NPH3 domain. The segment at 461-500 (EQTEGSSPSRMSPSPSQSMYADIPRGNNNNGGGGGGNNQN) is disordered. A compositionally biased stretch (low complexity) spans 466 to 478 (SSPSRMSPSPSQS). Position 546 is a phosphotyrosine (Tyr-546). The disordered stretch occupies residues 708–746 (SKLTKMSGQESHDISSGGEQAGVDHPPPRKPRRWRNSIS). Basic residues predominate over residues 735–746 (PRKPRRWRNSIS).

This sequence belongs to the NPH3 family. Interacts with PKS1, PKS2, RPT2, PHOT1 and PHOT2. Subunit of a complex made of CAR6, PHOT1 and RPT3/NPH3. In terms of processing, phosphorylated in the dark. As to expression, expressed in hypocotyls, guard cells and mesophyll cells.

The protein resides in the cell membrane. Its pathway is protein modification; protein ubiquitination. Its function is as follows. May act as a substrate-specific adapter of an E3 ubiquitin-protein ligase complex (CUL3-RBX1-BTB) which mediates the ubiquitination and subsequent proteasomal degradation of target proteins. Signal transducer of the phototropic response and photo-induced movements. Involved in the phot1 pathway under low blue light (LBL) fluence rate and in the phot2 pathway under higher fluence rate of blue light (HBL). Necessary for root and hypocotyl phototropisms, but not for the regulation of stomata opening. Not involved in chloroplast accumulation and translocation. In Arabidopsis thaliana (Mouse-ear cress), this protein is Root phototropism protein 3 (RPT3).